The chain runs to 183 residues: Putative 3-methyladenine DNA glycosylase (183 aa).

It belongs to the DNA glycosylase MPG family.

The polypeptide is Putative 3-methyladenine DNA glycosylase (Legionella pneumophila subsp. pneumophila (strain Philadelphia 1 / ATCC 33152 / DSM 7513)).